Reading from the N-terminus, the 446-residue chain is Corrinoid/iron-sulfur protein large subunit (446 aa).

Residues 2-59 enclose the 4Fe-4S domain; it reads PLTGLEIYKQLPKKNCGECGTPTCLAFAMNLASGKASLDSCPYVSDAAREALDAAAAP. Positions 17, 20, 25, and 42 each coordinate [4Fe-4S] cluster. 5-methoxybenzimidazolylcob(I)amide is bound by residues T340, T346, 370–373, and A433; that span reads GLSV.

As to quaternary structure, heterohexamer composed of 2 subunits of AcsC, 2 subunits of AcsD and 2 subunits of AcsE. The cofactor is [4Fe-4S] cluster.

Its function is as follows. Acts as a methyl group carrier in the anaerobic acetyl-CoA pathway (Wood-Ljungdahl pathway) of carbon monoxide and carbon dioxide fixation. Binds the corrinoid 5-methoxybenzimidazolylcobamide which is then methylated by the AcsE subunit. This chain is Corrinoid/iron-sulfur protein large subunit (acsC), found in Moorella thermoacetica (Clostridium thermoaceticum).